The following is a 20-amino-acid chain: GLWSTIKNVAAAAGKAAIKL.

A Leucine amide modification is found at L20.

Expressed by the skin glands.

It localises to the secreted. Antimicrobial peptide with moderate activity against both Gram-positive and Gram-negative bacteria, and important activity against Leishmania species (L.amazonensis and L.infantum). Acts on both Leishmania promastigote and amastigote forms. Shows activity against E.coli (MIC=17.8 uM), S.aureus (MIC=32.3 uM) and the phytopathogenic bacterium Xanthomonas axonopodis (MIC=2 uM). Shows low cytotoxicity against mammalian cells in models of peritoneal macrophages. This chain is Dermaseptin-N1, found in Pithecopus nordestinus (Northeastern Brazilian leaf frog).